A 224-amino-acid polypeptide reads, in one-letter code: Ribose-5-phosphate isomerase A (224 aa).

Residues 32-35 (TGST), 85-88 (DGAD), and 98-101 (KGGG) each bind substrate. Catalysis depends on glutamate 107, which acts as the Proton acceptor. Lysine 125 contacts substrate.

Belongs to the ribose 5-phosphate isomerase family. In terms of assembly, homodimer.

It catalyses the reaction aldehydo-D-ribose 5-phosphate = D-ribulose 5-phosphate. The protein operates within carbohydrate degradation; pentose phosphate pathway; D-ribose 5-phosphate from D-ribulose 5-phosphate (non-oxidative stage): step 1/1. Its function is as follows. Catalyzes the reversible conversion of ribose-5-phosphate to ribulose 5-phosphate. The protein is Ribose-5-phosphate isomerase A of Pseudomonas entomophila (strain L48).